Reading from the N-terminus, the 587-residue chain is Trihelix transcription factor GTL1 (587 aa).

Gly residues-rich tracts occupy residues 1–10 (MEQGGGGGGN) and 41–54 (GGLG…GGGS). Residues 1 to 63 (MEQGGGGGGN…SASSSSGNRW (63 aa)) form a disordered region. Residues 55–119 (ASSSSGNRWP…KCKEKFENVQ (65 aa)) form the Myb-like 1 domain. The Nuclear localization signal 1 signature appears at 96 to 103 (SRKLLELG). Residues 173–194 (SSSPFPVFSQPQPQTQTQPPQT) show a composition bias toward low complexity. The interval 173–264 (SSSPFPVFSQ…RKRGNRGGGG (92 aa)) is disordered. Pro residues predominate over residues 201–210 (PTPPPLPLPS). Residues 221 to 232 (SSHSSSTASGMG) show a composition bias toward low complexity. A compositionally biased stretch (acidic residues) spans 233–242 (SDDDDDDMDV). Residues 285 to 328 (QRSFLEALEKREQERLDREEAWKRQEMARLAREHEVMSQERAAS) are a coiled coil. Positions 348-435 (QLPPSLSSQP…EQSSLPSSSR (88 aa)) are disordered. The span at 356-366 (QPPPPYQPPPA) shows a compositional bias: pro residues. Composition is skewed to low complexity over residues 379–395 (AQSQ…QQQI) and 411–434 (QKQQ…PSSS). Residues 434-492 (SRWPKAEILALINLRSGMEPRYQDNVPKGLLWEEISTSMKRMGYNRNAKRCKEKWENIN) form the Myb-like 2 domain. The Nuclear localization signal 2 motif lies at 472 to 479 (MKRMGYNR). A disordered region spans residues 530 to 587 (GGGSSTSGLPQDQKQSPVTAMKPPQEGLVNVQQTHGSASTEEEEPIEESPQGTEKKTL). 2 stretches are compositionally biased toward polar residues: residues 538 to 547 (LPQDQKQSPV) and 559 to 568 (NVQQTHGSAS).

In terms of tissue distribution, mostly expressed in siliques, and, to a lower extent, in growing root hairs, leaves, stems, and flowers. Present in abaxial epidermal cells, predominantly in guard cells, pavement cells, and meristemoids.

It localises to the nucleus. In terms of biological role, transcription repressor that binds specific DNA sequence such as GT3 box 5'-GGTAAA-3' in the SDD1 promoter. Negative regulator of water use efficiency (WUE) via the promotion of stomatal density and distribution by the transcription repression of SDD1. Regulates the expression of several cell cycle genes and endoreduplication, especially in trichomes where it prevents ploidy-dependent plant cell growth. Regulates negatively root hair growth by directly binding RSL4 promoter and repressing RSL4 expression. The chain is Trihelix transcription factor GTL1 from Arabidopsis thaliana (Mouse-ear cress).